A 582-amino-acid polypeptide reads, in one-letter code: TBCC domain-containing protein 1 (582 aa).

The segment covering Glu-140 to Ser-153 has biased composition (low complexity). The interval Glu-140 to Lys-159 is disordered. The region spanning Pro-305 to Val-451 is the C-CAP/cofactor C-like domain. The span at Ser-547–Ser-558 shows a compositional bias: low complexity. The disordered stretch occupies residues Ser-547–Cys-582. Residues Ala-559–Cys-582 show a composition bias toward polar residues.

It belongs to the TBCC family.

It is found in the cytoplasm. Its subcellular location is the cytoskeleton. The protein localises to the microtubule organizing center. The protein resides in the centrosome. It localises to the spindle pole. Functionally, may play a role in the regulation of centrosome and Golgi apparatus positioning. The chain is TBCC domain-containing protein 1 (tbccd1) from Danio rerio (Zebrafish).